The following is a 125-amino-acid chain: MAISKEEVLEYIGSLSVLELSELVKMFEKKFGVSATPTVVAGAAVAGGAAAESEEKTEFNVILADSGAEKIKVIKVVREITGLGLKEAKDATEKTPHVLKEGVNKEEAETIKKKLEEVGAKVEVK.

Belongs to the bacterial ribosomal protein bL12 family. As to quaternary structure, homodimer. Part of the ribosomal stalk of the 50S ribosomal subunit. Forms a multimeric L10(L12)X complex, where L10 forms an elongated spine to which 2 to 4 L12 dimers bind in a sequential fashion. Binds GTP-bound translation factors.

Functionally, forms part of the ribosomal stalk which helps the ribosome interact with GTP-bound translation factors. Is thus essential for accurate translation. The protein is Large ribosomal subunit protein bL12 of Helicobacter pylori (strain ATCC 700392 / 26695) (Campylobacter pylori).